A 150-amino-acid polypeptide reads, in one-letter code: Macrodomain Ter protein (150 aa).

This sequence belongs to the MatP family. Homodimer.

Its subcellular location is the cytoplasm. Required for spatial organization of the terminus region of the chromosome (Ter macrodomain) during the cell cycle. Prevents early segregation of duplicated Ter macrodomains during cell division. Binds specifically to matS, which is a 13 bp signature motif repeated within the Ter macrodomain. This chain is Macrodomain Ter protein, found in Salmonella agona (strain SL483).